Reading from the N-terminus, the 712-residue chain is Elongation factor G (712 aa).

Positions 8 to 290 (TRYRNIGISA…AVIEFLPSPT (283 aa)) constitute a tr-type G domain. Residues 17-24 (AHIDAGKT), 88-92 (DTPGH), and 142-145 (NKMD) each bind GTP.

The protein belongs to the TRAFAC class translation factor GTPase superfamily. Classic translation factor GTPase family. EF-G/EF-2 subfamily.

It is found in the cytoplasm. Functionally, catalyzes the GTP-dependent ribosomal translocation step during translation elongation. During this step, the ribosome changes from the pre-translocational (PRE) to the post-translocational (POST) state as the newly formed A-site-bound peptidyl-tRNA and P-site-bound deacylated tRNA move to the P and E sites, respectively. Catalyzes the coordinated movement of the two tRNA molecules, the mRNA and conformational changes in the ribosome. This is Elongation factor G from Acinetobacter baumannii (strain AB0057).